The following is a 183-amino-acid chain: Transmembrane protein 52B (183 aa).

The signal sequence occupies residues 1–24 (MGVRVHVVAASALLYFILLSGTRC). Residues 40 to 60 (VHLWYIWLLVVIGALLLLCGL) traverse the membrane as a helical segment. The interval 158–183 (DLPPVPEEKQLPPTEKESTRIVDSWN) is disordered. Residues 163-177 (PEEKQLPPTEKESTR) show a composition bias toward basic and acidic residues.

The protein resides in the membrane. This Homo sapiens (Human) protein is Transmembrane protein 52B (TMEM52B).